The sequence spans 297 residues: Mitochondrial thiamine pyrophosphate carrier 1 (297 aa).

Solcar repeat units follow at residues 13-94 (SHVF…TNAA), 102-195 (PPTI…IRAR), and 196-295 (WPET…LMRV). Transmembrane regions (helical) follow at residues 19-36 (LVSGAIAGLAARSAIAPL), 75-91 (IMYIIYGSVQFGTYSYT), 109-128 (LAGAITGMASSLCSYPFDVL), 163-187 (GLGGFFHGVATSMANVTVSTAAMFG), 203-219 (TAGAISGVISRTITFPL), and 270-287 (GIGLGLLKSVPNTAINLW).

Belongs to the mitochondrial carrier (TC 2.A.29) family.

It is found in the mitochondrion inner membrane. Functionally, mitochondrial transporter that mediates uptake of thiamine pyrophosphate (ThPP) into mitochondria. The sequence is that of Mitochondrial thiamine pyrophosphate carrier 1 (TPC1) from Vanderwaltozyma polyspora (strain ATCC 22028 / DSM 70294 / BCRC 21397 / CBS 2163 / NBRC 10782 / NRRL Y-8283 / UCD 57-17) (Kluyveromyces polysporus).